Reading from the N-terminus, the 472-residue chain is tRNA-2-methylthio-N(6)-dimethylallyladenosine synthase (472 aa).

The MTTase N-terminal domain occupies 22–138 (RSYWITTFGC…LETLLQQVDS (117 aa)). 6 residues coordinate [4Fe-4S] cluster: Cys31, Cys67, Cys101, Cys173, Cys177, and Cys180. A Radical SAM core domain is found at 159 to 396 (RDSAICGWVN…NALVERNARE (238 aa)). The region spanning 399-467 (IRYQGRTEEV…SFSLSGTPLP (69 aa)) is the TRAM domain.

The protein belongs to the methylthiotransferase family. MiaB subfamily. Monomer. The cofactor is [4Fe-4S] cluster.

The protein resides in the cytoplasm. The catalysed reaction is N(6)-dimethylallyladenosine(37) in tRNA + (sulfur carrier)-SH + AH2 + 2 S-adenosyl-L-methionine = 2-methylsulfanyl-N(6)-dimethylallyladenosine(37) in tRNA + (sulfur carrier)-H + 5'-deoxyadenosine + L-methionine + A + S-adenosyl-L-homocysteine + 2 H(+). Catalyzes the methylthiolation of N6-(dimethylallyl)adenosine (i(6)A), leading to the formation of 2-methylthio-N6-(dimethylallyl)adenosine (ms(2)i(6)A) at position 37 in tRNAs that read codons beginning with uridine. The protein is tRNA-2-methylthio-N(6)-dimethylallyladenosine synthase of Synechococcus sp. (strain CC9902).